The following is a 199-amino-acid chain: Small ribosomal subunit protein uS4 (199 aa).

An S4 RNA-binding domain is found at 91–151 (SRLDNLVYRF…EKSKNVKAIA (61 aa)).

It belongs to the universal ribosomal protein uS4 family. As to quaternary structure, part of the 30S ribosomal subunit. Contacts protein S5. The interaction surface between S4 and S5 is involved in control of translational fidelity.

In terms of biological role, one of the primary rRNA binding proteins, it binds directly to 16S rRNA where it nucleates assembly of the body of the 30S subunit. Its function is as follows. With S5 and S12 plays an important role in translational accuracy. The sequence is that of Small ribosomal subunit protein uS4 from Exiguobacterium sp. (strain ATCC BAA-1283 / AT1b).